The following is a 735-amino-acid chain: Photosystem I P700 chlorophyll a apoprotein A2 (735 aa).

The next 8 membrane-spanning stretches (helical) occupy residues 47-70 (IFAS…FHVA), 136-159 (LYIG…LHLQ), 176-200 (LNHH…HVAI), 274-292 (MAHH…GHMY), 331-354 (LHFQ…QHMY), 370-396 (ASLY…IFFI), 418-440 (AIIS…LYVH), and 518-536 (FLVH…LILV). [4Fe-4S] cluster contacts are provided by Cys560 and Cys569. The next 2 helical transmembrane spans lie at 576–597 (AFYL…YFHW) and 644–666 (LSVW…MFLI). Residues His655, Met663, and Tyr671 each contribute to the chlorophyll a site. Trp672 lines the phylloquinone pocket. A helical transmembrane segment spans residues 708–728 (VVGLAHFSAGYILTYAAFLIA).

Belongs to the PsaA/PsaB family. The PsaA/B heterodimer binds the P700 chlorophyll special pair and subsequent electron acceptors. PSI consists of a core antenna complex that captures photons, and an electron transfer chain that converts photonic excitation into a charge separation. The eukaryotic PSI reaction center is composed of at least 11 subunits. P700 is a chlorophyll a/chlorophyll a' dimer, A0 is one or more chlorophyll a, A1 is one or both phylloquinones and FX is a shared 4Fe-4S iron-sulfur center. is required as a cofactor.

It localises to the plastid. It is found in the chloroplast thylakoid membrane. It carries out the reaction reduced [plastocyanin] + hnu + oxidized [2Fe-2S]-[ferredoxin] = oxidized [plastocyanin] + reduced [2Fe-2S]-[ferredoxin]. Functionally, psaA and PsaB bind P700, the primary electron donor of photosystem I (PSI), as well as the electron acceptors A0, A1 and FX. PSI is a plastocyanin/cytochrome c6-ferredoxin oxidoreductase, converting photonic excitation into a charge separation, which transfers an electron from the donor P700 chlorophyll pair to the spectroscopically characterized acceptors A0, A1, FX, FA and FB in turn. Oxidized P700 is reduced on the lumenal side of the thylakoid membrane by plastocyanin or cytochrome c6. This is Photosystem I P700 chlorophyll a apoprotein A2 from Tupiella akineta (Green alga).